The following is a 502-amino-acid chain: Lysine--tRNA ligase (502 aa).

Residues Glu-410 and Glu-417 each coordinate Mg(2+).

It belongs to the class-II aminoacyl-tRNA synthetase family. As to quaternary structure, homodimer. It depends on Mg(2+) as a cofactor.

Its subcellular location is the cytoplasm. The enzyme catalyses tRNA(Lys) + L-lysine + ATP = L-lysyl-tRNA(Lys) + AMP + diphosphate. This Photobacterium profundum (strain SS9) protein is Lysine--tRNA ligase.